The sequence spans 158 residues: Cyclic pyranopterin monophosphate synthase (158 aa).

Substrate contacts are provided by residues Leu-76 to His-78 and Met-114 to Glu-115. Asp-129 is an active-site residue.

It belongs to the MoaC family. Homohexamer; trimer of dimers.

The enzyme catalyses (8S)-3',8-cyclo-7,8-dihydroguanosine 5'-triphosphate = cyclic pyranopterin phosphate + diphosphate. Its pathway is cofactor biosynthesis; molybdopterin biosynthesis. Catalyzes the conversion of (8S)-3',8-cyclo-7,8-dihydroguanosine 5'-triphosphate to cyclic pyranopterin monophosphate (cPMP). The polypeptide is Cyclic pyranopterin monophosphate synthase (Shewanella sediminis (strain HAW-EB3)).